We begin with the raw amino-acid sequence, 99 residues long: DASH complex subunit DAD1 (99 aa).

The segment at 69-99 is disordered; the sequence is GMNHQTRENTRDENNKISSSDTEDENNNNKI. Over residues 73–83 the composition is skewed to basic and acidic residues; sequence QTRENTRDENN. Acidic residues predominate over residues 89–99; the sequence is DTEDENNNNKI.

This sequence belongs to the DASH complex DAD1 family. Component of the DASH complex consisting of ASK1, DAD1, DAD2, DAD3, DAD4, DAM1, DUO1, HSK3, SPC19 and SPC34, with a stoichiometry of one copy of each subunit per complex. Multiple DASH complexes oligomerize to form a ring that encircles spindle microtubules and organizes the rod-like NDC80 complexes of the outer kinetochore. DASH complex oligomerization strengthens microtubule attachments. On cytoplasmic microtubules, DASH complexes appear to form patches instead of rings.

Its subcellular location is the chromosome. The protein localises to the centromere. It is found in the kinetochore. The protein resides in the cytoplasm. It localises to the cytoskeleton. Its subcellular location is the spindle. The protein localises to the nucleus. Functionally, component of the DASH complex that connects microtubules with kinetochores and couples microtubule depolymerisation to chromosome movement; it is involved in retrieving kinetochores to the spindle poles before their re-orientation on the spindle in early mitosis and allows microtubule depolymerization to pull chromosomes apart and resist detachment during anaphase. Kinetochores, consisting of a centromere-associated inner segment and a microtubule-contacting outer segment, play a crucial role in chromosome segregation by mediating the physical connection between centromeric DNA and microtubules. Kinetochores also serve as an input point for the spindle assembly checkpoint, which delays anaphase until all chromosomes have bioriented on the mitotic spindle. This chain is DASH complex subunit DAD1, found in Candida albicans (strain SC5314 / ATCC MYA-2876) (Yeast).